We begin with the raw amino-acid sequence, 929 residues long: Formin-like protein 11 (929 aa).

The signal sequence occupies residues Met1 to Gly28. The segment at Glu153–Ser215 is disordered. Residues Lys171–Pro189 show a composition bias toward polar residues. Residues Arg191–Ser215 show a composition bias toward basic and acidic residues. Residues Phe222–Met242 form a helical membrane-spanning segment. 2 disordered regions span residues Pro372–Asn472 and Ala726–Thr749. The segment covering Met382–Met447 has biased composition (pro residues). An FH2 domain is found at Val468–Ser898. Positions Lys738–Thr749 are enriched in basic and acidic residues.

This sequence belongs to the formin-like family. Class-I subfamily.

It localises to the membrane. In Oryza sativa subsp. japonica (Rice), this protein is Formin-like protein 11 (FH11).